Here is a 109-residue protein sequence, read N- to C-terminus: U3-lycotoxin-Ls1x (109 aa).

An N-terminal signal peptide occupies residues 1–20 (MKFVLLFGVLLVTLFSYSSA). Positions 21–44 (EMLDDFDQADEDELLSLIEKEEAR) are excised as a propeptide. 4 disulfide bridges follow: Cys48–Cys63, Cys55–Cys72, Cys62–Cys88, and Cys74–Cys86.

The protein belongs to the neurotoxin 19 (CSTX) family. 01 subfamily. Expressed by the venom gland.

The protein localises to the secreted. In Lycosa singoriensis (Wolf spider), this protein is U3-lycotoxin-Ls1x.